The following is a 597-amino-acid chain: Aspartate--tRNA(Asp/Asn) ligase (597 aa).

Position 172 (E172) interacts with L-aspartate. An aspartate region spans residues 196-199; sequence QLFK. Residue R218 participates in L-aspartate binding. Residues 218-220 and Q227 each bind ATP; that span reads RDE. H454 lines the L-aspartate pocket. E488 provides a ligand contact to ATP. R495 serves as a coordination point for L-aspartate. ATP is bound at residue 540-543; that stretch reads GLDR.

Belongs to the class-II aminoacyl-tRNA synthetase family. Type 1 subfamily. In terms of assembly, homodimer.

It localises to the cytoplasm. The catalysed reaction is tRNA(Asx) + L-aspartate + ATP = L-aspartyl-tRNA(Asx) + AMP + diphosphate. In terms of biological role, aspartyl-tRNA synthetase with relaxed tRNA specificity since it is able to aspartylate not only its cognate tRNA(Asp) but also tRNA(Asn). Reaction proceeds in two steps: L-aspartate is first activated by ATP to form Asp-AMP and then transferred to the acceptor end of tRNA(Asp/Asn). This Chromobacterium violaceum (strain ATCC 12472 / DSM 30191 / JCM 1249 / CCUG 213 / NBRC 12614 / NCIMB 9131 / NCTC 9757 / MK) protein is Aspartate--tRNA(Asp/Asn) ligase.